Reading from the N-terminus, the 1351-residue chain is Tripartite motif-containing protein 66 (1351 aa).

Residues 105 to 150 (MARNCSECKEKRAAHILCTYCNRWLCSSCTEEHRHSPVPGGPFFPR) form a B box-type 1; atypical zinc finger. Residues C109, C112, C133, H139, C169, H172, C192, and H197 each coordinate Zn(2+). The B box-type 2 zinc-finger motif lies at 164-205 (DFTLYCPLHTQEVLKLFCETCDMLTCHSCLVVEHKEHRCRHV). The stretch at 234–304 (AKQIEDRIFE…IMVLNRQFEH (71 aa)) forms a coiled coil. 3 disordered regions span residues 542–608 (FGHH…CSQN), 663–730 (APVQ…VRKH), and 857–895 (CPLQ…DPSL). A compositionally biased stretch (pro residues) spans 560 to 588 (QLPPPPPPLPHPPPPLPPPPQQPHPPLPP). Residues 664–676 (PVQSQSQEETLQA) show a composition bias toward polar residues. Residues 872-884 (TGSSSSSGRTSGS) show a composition bias toward low complexity. A PxVxL motif motif is present at residues 995–999 (PYVRL). The disordered stretch occupies residues 1067-1098 (TSLAGQRPPEVEGTSPEEHRLIPRTPGAKKGP). The segment at 1105-1152 (EDFCAVCLNGGELLCCDRCPKVFHLSCHVPALLSFPGGEWVCTLCRSL) adopts a PHD-type zinc-finger fold. The region spanning 1176–1282 (GLSMYDQKKC…VFFEGWLKEI (107 aa)) is the Bromo domain. The interval 1289–1351 (AQPRQEDSDS…FRLANSISQV (63 aa)) is disordered.

Can form homodimers and heterodimers. Interacts with CBX5, CBX1 and CBX3 via PxVxL motif.

It is found in the nucleus. May function as transcription repressor; The repressive effects are mediated, at least in part, by recruitment of deacetylase activity. May play a role as negative regulator of postmeiotic genes acting through CBX3 complex formation and centromere association. This chain is Tripartite motif-containing protein 66 (TRIM66), found in Homo sapiens (Human).